Consider the following 252-residue polypeptide: Probable transcriptional regulatory protein all4276 (252 aa).

Belongs to the TACO1 family.

It is found in the cytoplasm. In Nostoc sp. (strain PCC 7120 / SAG 25.82 / UTEX 2576), this protein is Probable transcriptional regulatory protein all4276.